A 939-amino-acid chain; its full sequence is Intimin (939 aa).

Residues 1-41 (MITHGFYARTRHKHKLKKTFIMLSAGLGLFFYVNQNSFANG) form the signal peptide. The interval 40–153 (NGENYFKLGS…KLTKMSPDVT (114 aa)) is peptidoglycan-binding. The segment at 40–153 (NGENYFKLGS…KLTKMSPDVT (114 aa)) is sufficient for homodimerization. Residues 40–212 (NGENYFKLGS…LQAWLQHYGT (173 aa)) are required for periplasmic localization. The LysM domain occupies 63 to 112 (LFYTLKTGETVADLSKSQDINLSTIWSLNKHLYSSESEMMKAAPGQQIIL). The interval 189-430 (DTALGIAGNQ…PQYVNELRTL (242 aa)) is inverse autotransporter. The interval 402–411 (LYSMQFRYQF) is signature sequence for beta-barrel assembly machinery (BAM), which recognizes the unfolded beta-barrel in the periplasm. 2 consecutive Big-1 domains span residues 560–653 (VTDF…VIFV) and 660–751 (ITEI…VEFF). The interval 750–939 (FFTTLTIDDG…ESNAYATCVK (190 aa)) is required and sufficient for interaction with intimin receptor Tir. Residues 842-939 (LIVPNMSKRV…ESNAYATCVK (98 aa)) form a C-type lectin domain region. The tract at residues 842–939 (LIVPNMSKRV…ESNAYATCVK (98 aa)) is intimin receptor Tir-binding. Cys860 and Cys937 form a disulfide bridge.

This sequence belongs to the intimin/invasin family. Homodimer. Interacts with Tir.

The protein localises to the cell outer membrane. Functionally, an inverse autotransporter. Adhesin, which mediates attachment to the human intestine epithelial cells. Necessary for the production of attaching and effacing lesions on infected human tissue culture cells. Anchored to the outer membrane by binding to peptidoglycan (PGN) via its periplasmic domain, thus helping in receptor interactions during host invasion. PGN-binding may also aid in resisting mechanical and chemical stress during transit of the bacterium through the gastrointestinal tract of the host. Periplasmic domain binds purified E.coli PGN sacculi under acidic conditions in vitro and in vivo, but does not bind to chitin. Periplasmic domain binds PGN sacculi with an apparent dissociation constant (Kd) of 0.8 uM. No binding to PGN in vitro at normal physiological pH 7.4. The chain is Intimin from Escherichia coli O127:H6 (strain E2348/69 / EPEC).